Reading from the N-terminus, the 694-residue chain is Transcription activator of gluconeogenesis Pc22g08580 (694 aa).

The interval 1–61 (MNMETKNGSP…DPSRPRRKKA (61 aa)) is disordered. The segment covering 17–55 (SGERDSADITEHEQMDVKPKTNGDSKADRKAANAKDPSR) has biased composition (basic and acidic residues). Residues 65–93 (CFACQRAHLTCGDERPCQRCIKRGLQDAC) constitute a DNA-binding region (zn(2)-C6 fungal-type). Disordered regions lie at residues 126 to 240 (TLRN…GPFF), 276 to 300 (AAGD…AQFS), and 552 to 582 (TGGS…GTGR). Over residues 132 to 141 (PISRNGTNAV) the composition is skewed to polar residues. Residues 142 to 171 (NSNQQHSQQHPQQPTNPTNNNFYPTPQTQT) show a composition bias toward low complexity. 3 stretches are compositionally biased toward polar residues: residues 172-234 (GSYN…SQNP), 281-300 (PTDS…AQFS), and 552-581 (TGGS…SGTG).

The protein belongs to the ERT1/acuK family.

It localises to the nucleus. In terms of biological role, transcription factor which regulates nonfermentable carbon utilization. Activator of gluconeogenetic genes. In Penicillium rubens (strain ATCC 28089 / DSM 1075 / NRRL 1951 / Wisconsin 54-1255) (Penicillium chrysogenum), this protein is Transcription activator of gluconeogenesis Pc22g08580.